Consider the following 170-residue polypeptide: Tachykinin-4 (170 aa).

The N-terminal stretch at 1–16 (MLPLLALFLLIGPAVS) is a signal peptide. A propeptide spanning residues 17-54 (TTTRDREDLTFGAEAESWVTVNLKGIPVPSIELKLQEL) is cleaved from the precursor. Methionine amide is present on Met-66. A propeptide spanning residues 67-170 (GKRVEGVHPI…SQMMPRPSRP (104 aa)) is cleaved from the precursor. The tract at residues 107-170 (QETNHQSAGP…SQMMPRPSRP (64 aa)) is disordered. Polar residues predominate over residues 123–140 (SLQSQRGRSEPPNHQQHV).

Belongs to the tachykinin family.

Its subcellular location is the secreted. Functionally, tachykinins are active peptides which excite neurons, evoke behavioral responses, are potent vasodilators and secretagogues, and contract (directly or indirectly) many smooth muscles. Hemokinin induces plasma extravasation, mast cell degranulation, muscle contraction, salivary secretion and scratching behavior. Increases sperm motility. Induces potent analgesic effects and may play a role in pain modulation. Promotes survival of bone marrow B lineage cells and of cultured LPS-stimulated pre-B cells and may act as an autocrine factor required for B-cell survival and proliferation. Lowers systemic arterial pressure following intravenous injection. Induces interferon-gamma production and may play a role in the inflammatory response. Shows potent affinity and specificity for the NK-1 receptor. The polypeptide is Tachykinin-4 (Rattus norvegicus (Rat)).